Reading from the N-terminus, the 485-residue chain is Sulfate adenylyltransferase subunit 1 (485 aa).

In terms of domain architecture, tr-type G spans 17–232 (KDLLRLLTAG…LETVHIDNDH (216 aa)). Positions 26–33 (GSVDDGKS) are G1. A GTP-binding site is contributed by 26–33 (GSVDDGKS). The tract at residues 84 to 88 (GITID) is G2. Residues 105-108 (DTPG) are G3. Residues 105–109 (DTPGH) and 160–163 (NKMD) contribute to the GTP site. A G4 region spans residues 160–163 (NKMD). The interval 197–199 (SAL) is G5.

It belongs to the TRAFAC class translation factor GTPase superfamily. Classic translation factor GTPase family. CysN/NodQ subfamily. As to quaternary structure, heterodimer composed of CysD, the smaller subunit, and CysN.

The catalysed reaction is sulfate + ATP + H(+) = adenosine 5'-phosphosulfate + diphosphate. It participates in sulfur metabolism; hydrogen sulfide biosynthesis; sulfite from sulfate: step 1/3. Functionally, with CysD forms the ATP sulfurylase (ATPS) that catalyzes the adenylation of sulfate producing adenosine 5'-phosphosulfate (APS) and diphosphate, the first enzymatic step in sulfur assimilation pathway. APS synthesis involves the formation of a high-energy phosphoric-sulfuric acid anhydride bond driven by GTP hydrolysis by CysN coupled to ATP hydrolysis by CysD. The sequence is that of Sulfate adenylyltransferase subunit 1 from Bacteroides thetaiotaomicron (strain ATCC 29148 / DSM 2079 / JCM 5827 / CCUG 10774 / NCTC 10582 / VPI-5482 / E50).